We begin with the raw amino-acid sequence, 105 residues long: Large ribosomal subunit protein uL24 (105 aa).

Belongs to the universal ribosomal protein uL24 family. As to quaternary structure, part of the 50S ribosomal subunit.

One of two assembly initiator proteins, it binds directly to the 5'-end of the 23S rRNA, where it nucleates assembly of the 50S subunit. Its function is as follows. One of the proteins that surrounds the polypeptide exit tunnel on the outside of the subunit. This is Large ribosomal subunit protein uL24 from Mycobacterium avium (strain 104).